We begin with the raw amino-acid sequence, 732 residues long: uncharacterized protein (732 aa).

Residues 145–207 are disordered; the sequence is ETLRDSVINP…RRRPEMASPH (63 aa). Basic and acidic residues predominate over residues 170–179; that stretch reads KGHETLERGS. A Reverse transcriptase domain is found at 176-524; the sequence is ERGSKALGPE…KKIPFLGYLI (349 aa).

The protein resides in the mitochondrion. This is an uncharacterized protein from Marchantia polymorpha (Common liverwort).